The chain runs to 185 residues: 4-hydroxy-tetrahydrodipicolinate reductase (185 aa).

Residues 12 to 17 (GAGGRM) and Glu-38 contribute to the NAD(+) site. Residue Arg-39 participates in NADP(+) binding. Residues 102–104 (GTT) and 126–129 (AANF) contribute to the NAD(+) site. His-159 serves as the catalytic Proton donor/acceptor. His-160 lines the (S)-2,3,4,5-tetrahydrodipicolinate pocket. Catalysis depends on Lys-163, which acts as the Proton donor. 169–170 (GT) contacts (S)-2,3,4,5-tetrahydrodipicolinate.

The protein belongs to the DapB family. Homotetramer.

It localises to the cytoplasm. It catalyses the reaction (S)-2,3,4,5-tetrahydrodipicolinate + NAD(+) + H2O = (2S,4S)-4-hydroxy-2,3,4,5-tetrahydrodipicolinate + NADH + H(+). It carries out the reaction (S)-2,3,4,5-tetrahydrodipicolinate + NADP(+) + H2O = (2S,4S)-4-hydroxy-2,3,4,5-tetrahydrodipicolinate + NADPH + H(+). It functions in the pathway amino-acid biosynthesis; L-lysine biosynthesis via DAP pathway; (S)-tetrahydrodipicolinate from L-aspartate: step 4/4. Its function is as follows. Catalyzes the conversion of 4-hydroxy-tetrahydrodipicolinate (HTPA) to tetrahydrodipicolinate. In Klebsiella pneumoniae, this protein is 4-hydroxy-tetrahydrodipicolinate reductase (dapB).